The chain runs to 419 residues: tRNA modification GTPase MnmE (419 aa).

Residues Arg2, Glu59, and Arg99 each coordinate (6S)-5-formyl-5,6,7,8-tetrahydrofolate. In terms of domain architecture, TrmE-type G spans 197 to 343; the sequence is GLSVVIAGPP…LHTMIVEMAR (147 aa). Residue Asn207 participates in K(+) binding. GTP is bound by residues 207–212, 226–232, and 251–254; these read NAGKST, SPVAGTT, and DTAG. Position 211 (Ser211) interacts with Mg(2+). Positions 226, 228, and 231 each coordinate K(+). Thr232 contacts Mg(2+). Lys419 serves as a coordination point for (6S)-5-formyl-5,6,7,8-tetrahydrofolate.

The protein belongs to the TRAFAC class TrmE-Era-EngA-EngB-Septin-like GTPase superfamily. TrmE GTPase family. Homodimer. Heterotetramer of two MnmE and two MnmG subunits. K(+) serves as cofactor.

It is found in the cytoplasm. Exhibits a very high intrinsic GTPase hydrolysis rate. Involved in the addition of a carboxymethylaminomethyl (cmnm) group at the wobble position (U34) of certain tRNAs, forming tRNA-cmnm(5)s(2)U34. The polypeptide is tRNA modification GTPase MnmE (Sphingopyxis alaskensis (strain DSM 13593 / LMG 18877 / RB2256) (Sphingomonas alaskensis)).